Here is a 325-residue protein sequence, read N- to C-terminus: Diacylglycerol acyltransferase/mycolyltransferase Ag85B (325 aa).

The first 38 residues, 1–38, serve as a signal peptide directing secretion; it reads MTFIDKIRGHWARRMTVAAVAALLLPGLVGVVGGSATA. Residue 82–83 participates in substrate binding; sequence LR. Positions 98–108 are fibronectin-binding; that stretch reads FEMFLDSGLSV. C127 and C132 form a disulfide bridge. Residue S166 participates in substrate binding. The active-site Nucleophile is S166. The active site involves E272. Substrate contacts are provided by residues 274–277 and 304–306; these read LTIR and HNW. The active site involves H304.

The protein belongs to the mycobacterial A85 antigen family.

Its subcellular location is the secreted. It carries out the reaction 2 alpha,alpha'-trehalose 6-mycolate = alpha,alpha'-trehalose 6,6'-bismycolate + alpha,alpha-trehalose. The enzyme catalyses an acyl-CoA + a 1,2-diacyl-sn-glycerol = a triacyl-sn-glycerol + CoA. Functionally, the antigen 85 proteins (FbpA, FbpB, FbpC) are responsible for the high affinity of mycobacteria for fibronectin, a large adhesive glycoprotein. They also help to maintain the integrity of the cell wall by catalyzing the transfer of mycolic acids to cell wall arabinogalactan and through the synthesis of alpha,alpha-trehalose dimycolate (TDM, cord factor). They catalyze the transfer of a mycoloyl residue from one molecule of alpha,alpha-trehalose monomycolate (TMM) to another TMM, leading to the formation of TDM. This is Diacylglycerol acyltransferase/mycolyltransferase Ag85B (fbpB) from Mycolicibacterium smegmatis (strain ATCC 700084 / mc(2)155) (Mycobacterium smegmatis).